Consider the following 302-residue polypeptide: Troponin T, cardiac muscle isoforms (302 aa).

Over residues 1-55 (MSDSEEVVEEYEQEQEEEYVEEEEEEWLEEDDGQEDQVDEEEEETEETTAEEQED) the composition is skewed to acidic residues. 3 disordered regions span residues 1–99 (MSDS…GERL), 138–230 (KDRI…RKPL), and 280–302 (SDHQ…GRWK). S2 is subject to N-acetylserine. Position 2 is a phosphoserine; by CK2 (S2). Residues 65 to 79 (EGDREQEPGEGESKP) are compositionally biased toward basic and acidic residues. Residues 82–93 (KPFMPNLVPPKI) are compositionally biased toward pro residues. Composition is skewed to basic and acidic residues over residues 138–186 (KDRI…EKEA) and 204–230 (KSEK…RKPL).

Belongs to the troponin T family.

Troponin T is the tropomyosin-binding subunit of troponin, the thin filament regulatory complex which confers calcium-sensitivity to striated muscle actomyosin ATPase activity. The polypeptide is Troponin T, cardiac muscle isoforms (TNNT2) (Gallus gallus (Chicken)).